The sequence spans 175 residues: Alkyl hydroperoxide reductase AhpD (175 aa).

Cys131 (proton donor) is an active-site residue. The cysteines at positions 131 and 134 are disulfide-linked. The active-site Cysteine sulfenic acid (-SOH) intermediate is Cys134.

The protein belongs to the AhpD family.

The catalysed reaction is N(6)-[(R)-dihydrolipoyl]-L-lysyl-[lipoyl-carrier protein] + a hydroperoxide = N(6)-[(R)-lipoyl]-L-lysyl-[lipoyl-carrier protein] + an alcohol + H2O. Functionally, antioxidant protein with alkyl hydroperoxidase activity. Required for the reduction of the AhpC active site cysteine residues and for the regeneration of the AhpC enzyme activity. The sequence is that of Alkyl hydroperoxide reductase AhpD from Brucella canis (strain ATCC 23365 / NCTC 10854 / RM-666).